A 152-amino-acid polypeptide reads, in one-letter code: Ribosomal RNA large subunit methyltransferase H (152 aa).

S-adenosyl-L-methionine contacts are provided by residues Leu-65, Gly-96, and Leu-115–Trp-120.

The protein belongs to the RNA methyltransferase RlmH family. As to quaternary structure, homodimer.

The protein resides in the cytoplasm. The enzyme catalyses pseudouridine(1915) in 23S rRNA + S-adenosyl-L-methionine = N(3)-methylpseudouridine(1915) in 23S rRNA + S-adenosyl-L-homocysteine + H(+). In terms of biological role, specifically methylates the pseudouridine at position 1915 (m3Psi1915) in 23S rRNA. This Gluconacetobacter diazotrophicus (strain ATCC 49037 / DSM 5601 / CCUG 37298 / CIP 103539 / LMG 7603 / PAl5) protein is Ribosomal RNA large subunit methyltransferase H.